The primary structure comprises 338 residues: DNA polymerase III subunit delta (338 aa).

The protein belongs to the DNA polymerase HolA subunit family. In terms of assembly, DNA polymerase III contains a core (composed of alpha, epsilon and theta chains) that associates with a tau subunit. This core dimerizes to form the POLIII' complex. PolIII' associates with the gamma complex (composed of gamma, delta, delta', psi and chi chains) and with the beta chain to form the complete DNA polymerase III complex.

It catalyses the reaction DNA(n) + a 2'-deoxyribonucleoside 5'-triphosphate = DNA(n+1) + diphosphate. Functionally, DNA polymerase III is a complex, multichain enzyme responsible for most of the replicative synthesis in bacteria. This DNA polymerase also exhibits 3' to 5' exonuclease activity. The delta subunit seems to interact with the gamma subunit to transfer the beta subunit on the DNA. In Buchnera aphidicola subsp. Schizaphis graminum (strain Sg), this protein is DNA polymerase III subunit delta (holA).